The sequence spans 570 residues: Proline--tRNA ligase (570 aa).

Belongs to the class-II aminoacyl-tRNA synthetase family. ProS type 1 subfamily. In terms of assembly, homodimer.

It localises to the cytoplasm. It catalyses the reaction tRNA(Pro) + L-proline + ATP = L-prolyl-tRNA(Pro) + AMP + diphosphate. In terms of biological role, catalyzes the attachment of proline to tRNA(Pro) in a two-step reaction: proline is first activated by ATP to form Pro-AMP and then transferred to the acceptor end of tRNA(Pro). As ProRS can inadvertently accommodate and process non-cognate amino acids such as alanine and cysteine, to avoid such errors it has two additional distinct editing activities against alanine. One activity is designated as 'pretransfer' editing and involves the tRNA(Pro)-independent hydrolysis of activated Ala-AMP. The other activity is designated 'posttransfer' editing and involves deacylation of mischarged Ala-tRNA(Pro). The misacylated Cys-tRNA(Pro) is not edited by ProRS. This Wolinella succinogenes (strain ATCC 29543 / DSM 1740 / CCUG 13145 / JCM 31913 / LMG 7466 / NCTC 11488 / FDC 602W) (Vibrio succinogenes) protein is Proline--tRNA ligase.